We begin with the raw amino-acid sequence, 601 residues long: Sulfite reductase [NADPH] flavoprotein alpha-component (601 aa).

Positions 65 to 203 constitute a Flavodoxin-like domain; that stretch reads ITIISASQTG…NYNKWSQDLL (139 aa). FMN contacts are provided by residues 71–76, 118–121, and 154–163; these read SQTGNA, STQG, and LGDTSYNLFC. An FAD-binding FR-type domain is found at 236–450; the sequence is KNPAEGIILT…IQTNDNFRLP (215 aa). FAD-binding positions include threonine 324, isoleucine 358, 388 to 391, 406 to 408, and 421 to 424; these read RLYS, TVG, and GGAS. NADP(+) is bound by residues 521 to 522, 527 to 531, and aspartate 563; these read SQ and KIYVQ. Residue tyrosine 601 participates in FAD binding.

Belongs to the NADPH-dependent sulphite reductase flavoprotein subunit CysJ family. This sequence in the N-terminal section; belongs to the flavodoxin family. It in the C-terminal section; belongs to the flavoprotein pyridine nucleotide cytochrome reductase family. Alpha(8)-beta(8). The alpha component is a flavoprotein, the beta component is a hemoprotein. It depends on FAD as a cofactor. FMN is required as a cofactor.

The enzyme catalyses hydrogen sulfide + 3 NADP(+) + 3 H2O = sulfite + 3 NADPH + 4 H(+). Its pathway is sulfur metabolism; hydrogen sulfide biosynthesis; hydrogen sulfide from sulfite (NADPH route): step 1/1. In terms of biological role, component of the sulfite reductase complex that catalyzes the 6-electron reduction of sulfite to sulfide. This is one of several activities required for the biosynthesis of L-cysteine from sulfate. The flavoprotein component catalyzes the electron flow from NADPH -&gt; FAD -&gt; FMN to the hemoprotein component. In Buchnera aphidicola subsp. Acyrthosiphon pisum (strain APS) (Acyrthosiphon pisum symbiotic bacterium), this protein is Sulfite reductase [NADPH] flavoprotein alpha-component.